A 464-amino-acid polypeptide reads, in one-letter code: Uronate isomerase (464 aa).

Belongs to the metallo-dependent hydrolases superfamily. Uronate isomerase family.

The catalysed reaction is D-glucuronate = D-fructuronate. The enzyme catalyses aldehydo-D-galacturonate = keto-D-tagaturonate. The protein operates within carbohydrate metabolism; pentose and glucuronate interconversion. The protein is Uronate isomerase of Caldicellulosiruptor bescii (strain ATCC BAA-1888 / DSM 6725 / KCTC 15123 / Z-1320) (Anaerocellum thermophilum).